Consider the following 384-residue polypeptide: Conidiophore development protein hymA (384 aa).

Over residues E362–S374 the composition is skewed to basic and acidic residues. A disordered region spans residues E362 to A384.

This sequence belongs to the Mo25 family.

Its subcellular location is the cytoplasm. Its function is as follows. Required for conidiophore development. This is Conidiophore development protein hymA (hymA) from Emericella nidulans (strain FGSC A4 / ATCC 38163 / CBS 112.46 / NRRL 194 / M139) (Aspergillus nidulans).